Reading from the N-terminus, the 203-residue chain is MDNAILNSELIAIQAGNIIVYNYDGGNREYISASTEYLAVGVGIPANSCLDAPGSHKAGYAILRSEDLSSWEYVPDHRGETVYSIDTGNPEEITVLGDYPENTTTIAPLTPYDKWDGEKWVVDTEAQHSAAVEAAETKRQSLIDTAMDSISLIQLKLRAGRKLTQAETTQLNSVLDYIDELNAMDLTTAPDLNWPEKQLSTAS.

This sequence belongs to the tfa family.

This Escherichia coli protein is Tail fiber assembly protein homolog (T).